The following is a 629-amino-acid chain: Dolichyl-diphosphooligosaccharide--protein glycosyltransferase subunit 2 (629 aa).

Positions 1-22 (MAPPGSRTVLLLALTIIARTQA) are cleaved as a signal peptide. The Lumenal portion of the chain corresponds to 23 to 541 (LKPTHYLTKH…RDPEKRPPTV (519 aa)). Residue Asn-106 is glycosylated (N-linked (GlcNAc...) asparagine). Residue Lys-154 forms a Glycyl lysine isopeptide (Lys-Gly) (interchain with G-Cter in ubiquitin) linkage. A helical transmembrane segment spans residues 542–562 (VSNTFTGLILSPLLLLFALWI). The Cytoplasmic portion of the chain corresponds to 563-570 (RIGAKISN). A helical membrane pass occupies residues 571–591 (FTFGLTIIFHLGHAMLAMYVY). Over 592–594 (WTQ) the chain is Lumenal. Residues 595-615 (LNMFQTLKYLAILGSVTFLAG) form a helical membrane-spanning segment. At 616–629 (NRMLAQQAIKRTAH) the chain is on the cytoplasmic side.

The protein belongs to the SWP1 family. As to quaternary structure, component of the oligosaccharyltransferase (OST) complex. OST exists in two different complex forms which contain common core subunits RPN1, RPN2, OST48, OST4, DAD1 and TMEM258, either STT3A or STT3B as catalytic subunits, and form-specific accessory subunits. STT3A complex assembly occurs through the formation of 3 subcomplexes. Subcomplex 1 contains RPN1 and TMEM258, subcomplex 2 contains the STT3A-specific subunits STT3A, DC2/OSTC, and KCP2 as well as the core subunit OST4, and subcomplex 3 contains RPN2, DAD1, and OST48. The STT3A complex can form stable complexes with the Sec61 complex or with both the Sec61 and TRAP complexes. Interacts with DDI2. Interacts with TMEM35A/NACHO.

It localises to the endoplasmic reticulum. It is found in the endoplasmic reticulum membrane. It participates in protein modification; protein glycosylation. In terms of biological role, subunit of the oligosaccharyl transferase (OST) complex that catalyzes the initial transfer of a defined glycan (Glc(3)Man(9)GlcNAc(2) in eukaryotes) from the lipid carrier dolichol-pyrophosphate to an asparagine residue within an Asn-X-Ser/Thr consensus motif in nascent polypeptide chains, the first step in protein N-glycosylation. N-glycosylation occurs cotranslationally and the complex associates with the Sec61 complex at the channel-forming translocon complex that mediates protein translocation across the endoplasmic reticulum (ER). All subunits are required for a maximal enzyme activity. This Sus scrofa (Pig) protein is Dolichyl-diphosphooligosaccharide--protein glycosyltransferase subunit 2.